A 122-amino-acid chain; its full sequence is Small ribosomal subunit protein uS10y (122 aa).

The protein belongs to the universal ribosomal protein uS10 family.

The protein is Small ribosomal subunit protein uS10y (RPS20B) of Arabidopsis thaliana (Mouse-ear cress).